The sequence spans 210 residues: MTLHLQAAGLACERDWRLLFEQLDFELGAGDMLQISGPNGSGKTSLLRLLAGLMQPTAGQILLGGKPLAEQRHALASILLWIGHAAGIKDLLTAEENLTWLCALHQPASREAIWAALEAVGLRGFEDVPCHTLSAGQQRRVALARLHLACPPLWILDEPFTALDKQGVAQLEAHLAAHCEQGGTVVLTTHHTLERKPSGYRELNLGQWAA.

Residues 3–205 (LHLQAAGLAC…KPSGYRELNL (203 aa)) enclose the ABC transporter domain. Residue 37–44 (GPNGSGKT) participates in ATP binding.

This sequence belongs to the ABC transporter superfamily. CcmA exporter (TC 3.A.1.107) family. As to quaternary structure, the complex is composed of two ATP-binding proteins (CcmA) and two transmembrane proteins (CcmB).

It localises to the cell inner membrane. The enzyme catalyses heme b(in) + ATP + H2O = heme b(out) + ADP + phosphate + H(+). In terms of biological role, part of the ABC transporter complex CcmAB involved in the biogenesis of c-type cytochromes; once thought to export heme, this seems not to be the case, but its exact role is uncertain. Responsible for energy coupling to the transport system. The sequence is that of Cytochrome c biogenesis ATP-binding export protein CcmA from Pseudomonas putida (strain GB-1).